The chain runs to 188 residues: uncharacterized protein (188 aa).

Positions Ala-121–Glu-142 are disordered. The span at Arg-130 to Glu-142 shows a compositional bias: basic and acidic residues.

This sequence belongs to the chlamydial CPn_0422/CT_273/TC_0545 family.

This is an uncharacterized protein from Chlamydia trachomatis serovar D (strain ATCC VR-885 / DSM 19411 / UW-3/Cx).